A 219-amino-acid chain; its full sequence is Urease subunit gamma/beta (219 aa).

The tract at residues 1–101 (MFLTPREQEK…LVTVRNPIKS (101 aa)) is urease gamma. Positions 102–219 (SKKTLNTYII…IKRAKERGFA (118 aa)) are urease beta.

In the N-terminal section; belongs to the urease gamma subunit family. The protein in the C-terminal section; belongs to the urease beta subunit family. Heterohexamer of 3 UreC (alpha) and 3 UreAB (gamma/beta) subunits.

Its subcellular location is the cytoplasm. It catalyses the reaction urea + 2 H2O + H(+) = hydrogencarbonate + 2 NH4(+). It functions in the pathway nitrogen metabolism; urea degradation; CO(2) and NH(3) from urea (urease route): step 1/1. This is Urease subunit gamma/beta from Sulfurisphaera tokodaii (strain DSM 16993 / JCM 10545 / NBRC 100140 / 7) (Sulfolobus tokodaii).